The following is a 467-amino-acid chain: Thiohydroximate-O-sulfate sulfur/sulfate-lyase (nitrile-forming) NSP3 (467 aa).

The Jacalin-type lectin domain maps to 2 to 143; the sequence is AQKLVAQGGE…LHSLGAYVSL (142 aa). Kelch repeat units follow at residues 177–225, 230–276, 280–329, 331–375, and 379–434; these read KIYS…VRMV, TLYT…SMAA, NVYV…VVQG, VWIV…ASAA, and HIVI…ASTT. The active-site Proton donor is the R237. Positions 237, 270, 292, 321, and 370 each coordinate a (Z)-N-(sulfonatooxy)alkanimidothioate. R292 (proton donor) is an active-site residue. Positions 386, 390, and 394 each coordinate Fe(2+). W429 lines the a (Z)-N-(sulfonatooxy)alkanimidothioate pocket.

The protein belongs to the jacalin lectin family. Fe(2+) is required as a cofactor. As to expression, mainly expressed in roots, and, at low levels, in seedlings and leaves. Observed in seeds.

The enzyme catalyses a (Z)-N-(sulfonatooxy)alkanimidothioate = a nitrile + sulfur + sulfate. It catalyses the reaction (Z)-phenyl-N-(sulfonatooxy)methanimidothioate = phenylacetonitrile + sulfur + sulfate. It carries out the reaction (Z)-N-(sulfonatooxy)prop-2-enimidothioate = but-3-enenitrile + sulfur + sulfate. Its function is as follows. Specifier protein responsible for constitutive and herbivore-induced simple nitrile formation, especially in roots. Promotes simple nitriles, but not epithionitrile or thiocyanate formation. Converts allylglucosinolate and benzylglucosinolate (glucotropaeolin) to their corresponding simple nitriles in the presence of myrosinase. This Arabidopsis thaliana (Mouse-ear cress) protein is Thiohydroximate-O-sulfate sulfur/sulfate-lyase (nitrile-forming) NSP3.